Reading from the N-terminus, the 671-residue chain is DNA ligase (671 aa).

NAD(+) is bound by residues 32 to 36, 81 to 82, and Glu113; these read DAEYD and SL. Residue Lys115 is the N6-AMP-lysine intermediate of the active site. NAD(+) is bound by residues Arg136, Glu173, Lys290, and Lys314. 4 residues coordinate Zn(2+): Cys408, Cys411, Cys426, and Cys432. In terms of domain architecture, BRCT spans 593–671; the sequence is EIDSPFAGKT…EAEMIRLLGA (79 aa).

The protein belongs to the NAD-dependent DNA ligase family. LigA subfamily. Mg(2+) serves as cofactor. Requires Mn(2+) as cofactor.

The catalysed reaction is NAD(+) + (deoxyribonucleotide)n-3'-hydroxyl + 5'-phospho-(deoxyribonucleotide)m = (deoxyribonucleotide)n+m + AMP + beta-nicotinamide D-nucleotide.. DNA ligase that catalyzes the formation of phosphodiester linkages between 5'-phosphoryl and 3'-hydroxyl groups in double-stranded DNA using NAD as a coenzyme and as the energy source for the reaction. It is essential for DNA replication and repair of damaged DNA. This chain is DNA ligase, found in Salmonella newport (strain SL254).